The following is a 189-amino-acid chain: Protein OPG107 (189 aa).

The Intravirion segment spans residues 1-28; it reads MDKTTLSVNACNLEYVREKAIVGVQAAK. Residues 29-49 form a helical; Signal-anchor for type III membrane protein membrane-spanning segment; it reads TSTLIFFVIILAISALLLWFQ. Topologically, residues 50–189 are virion surface; it reads TSDNPVFNEL…HWCSDFSNME (140 aa).

This sequence belongs to the orthopoxvirus OPG107 family. In terms of assembly, part of a stable entry-fusion complex (EFC) which is at least composed of proteins OPG143, OPG147, OPG155, OPG86, OPG94, OPG107, OPG104, and OPG099. Formation of the viral membrane is necessary for the assembly of the complex. Contains two intramolecular disulfide bonds. They are created by the viral disulfide bond formation pathway, a poxvirus-specific pathway that operates on the cytoplasmic side of the MV membranes.

It is found in the virion membrane. The protein localises to the host endoplasmic reticulum membrane. Envelope protein part of the entry-fusion complex responsible for the virus membrane fusion with host cell membrane during virus entry. Also plays a role in cell-cell fusion (syncytium formation). This chain is Protein OPG107 (OPG107), found in Bos taurus (Bovine).